Consider the following 361-residue polypeptide: sn-glycerol-3-phosphate import ATP-binding protein UgpC (361 aa).

Residues 4–235 enclose the ABC transporter domain; that stretch reads LSLKGVRKSY…PATVFVAGFI (232 aa). Residue 37-44 participates in ATP binding; that stretch reads GPSGCGKS.

This sequence belongs to the ABC transporter superfamily. sn-glycerol-3-phosphate importer (TC 3.A.1.1.3) family. The complex is composed of two ATP-binding proteins (UgpC), two transmembrane proteins (UgpA and UgpE) and a solute-binding protein (UgpB).

Its subcellular location is the cell inner membrane. The catalysed reaction is sn-glycerol 3-phosphate(out) + ATP + H2O = sn-glycerol 3-phosphate(in) + ADP + phosphate + H(+). In terms of biological role, part of the ABC transporter complex UgpBAEC involved in sn-glycerol-3-phosphate (G3P) import. Responsible for energy coupling to the transport system. This Burkholderia cenocepacia (strain HI2424) protein is sn-glycerol-3-phosphate import ATP-binding protein UgpC.